The following is a 59-amino-acid chain: Large ribosomal subunit protein bL32 (59 aa).

Residues 1-40 (MAVQQNKKSPSKRGMHRSHDFLRTTPLSVDPGTGEVHLRH) form a disordered region.

Belongs to the bacterial ribosomal protein bL32 family.

The protein is Large ribosomal subunit protein bL32 of Nitrosospira multiformis (strain ATCC 25196 / NCIMB 11849 / C 71).